Here is an 883-residue protein sequence, read N- to C-terminus: DNA double-strand break repair Rad50 ATPase (883 aa).

Residues Arg12, 32–38 (NGSGKSS), and Gln134 each bind ATP. The stretch at 218–420 (ELRGELGGLE…EIGSRRGELK (203 aa)) forms a coiled coil. Residues 395-492 (IQKARERKEE…ELVEVEKTLK (98 aa)) form the Zinc-hook domain. 2 residues coordinate Zn(2+): Cys440 and Cys443. Coiled coils occupy residues 452 to 585 (RKEL…KKLG) and 620 to 741 (EDLL…LLKE). 790–795 (FLSGGE) contributes to the ATP binding site.

Belongs to the SMC family. RAD50 subfamily. Homodimer. Forms a heterotetramer composed of two Mre11 subunits and two Rad50 subunits. Zn(2+) serves as cofactor.

Its function is as follows. Part of the Rad50/Mre11 complex, which is involved in the early steps of DNA double-strand break (DSB) repair. The complex may facilitate opening of the processed DNA ends to aid in the recruitment of HerA and NurA. Rad50 controls the balance between DNA end bridging and DNA resection via ATP-dependent structural rearrangements of the Rad50/Mre11 complex. The chain is DNA double-strand break repair Rad50 ATPase from Thermococcus kodakarensis (strain ATCC BAA-918 / JCM 12380 / KOD1) (Pyrococcus kodakaraensis (strain KOD1)).